The primary structure comprises 489 residues: uncharacterized protein (489 aa).

Transmembrane regions (helical) follow at residues 1 to 21 (MNAALIIIFGVLLLSIFLGIR), 40 to 60 (FGTVFVFLLMAGEIYTTFTFL), 74 to 94 (FYIIAYGCLAYILSYWLLPAV), 117 to 137 (PLLGILVSLVGIAALIPYLVL), 158 to 178 (AAIWIGAVSITVYVMVSGIHG), 188 to 208 (IMILVVVLFLGVYLPIHYYGG), 234 to 254 (AWFSSTVLLTALGFYMWPHTF), 271 to 291 (IIMPLYQLVLLFVLFVGFAAI), 318 to 338 (FVGIIGAAGLLTALVPGSMIL), 362 to 382 (VSALAKFLVPVIALISVYFTF), 388 to 408 (IVTLLLMGYSLVTQLFPALLF), 422 to 442 (FAGIIAGVGAVTYITMTETTI), and 456 to 476 (LNVGIVALLLNITVMMAVSLM).

Belongs to the sodium:solute symporter (SSF) (TC 2.A.21) family.

The protein localises to the cell membrane. This is an uncharacterized protein from Bacillus subtilis (strain 168).